Reading from the N-terminus, the 490-residue chain is Lysine--tRNA ligase (490 aa).

Glutamate 400 and glutamate 407 together coordinate Mg(2+).

Belongs to the class-II aminoacyl-tRNA synthetase family. As to quaternary structure, homodimer. Mg(2+) serves as cofactor.

It is found in the cytoplasm. The enzyme catalyses tRNA(Lys) + L-lysine + ATP = L-lysyl-tRNA(Lys) + AMP + diphosphate. This is Lysine--tRNA ligase (lysS) from Mycoplasma genitalium (strain ATCC 33530 / DSM 19775 / NCTC 10195 / G37) (Mycoplasmoides genitalium).